Consider the following 194-residue polypeptide: Large ribosomal subunit protein bL25 (194 aa).

It belongs to the bacterial ribosomal protein bL25 family. CTC subfamily. Part of the 50S ribosomal subunit; part of the 5S rRNA/L5/L18/L25 subcomplex. Contacts the 5S rRNA. Binds to the 5S rRNA independently of L5 and L18.

In terms of biological role, this is one of the proteins that binds to the 5S RNA in the ribosome where it forms part of the central protuberance. In Geotalea uraniireducens (strain Rf4) (Geobacter uraniireducens), this protein is Large ribosomal subunit protein bL25.